A 213-amino-acid polypeptide reads, in one-letter code: Holliday junction resolvase RecU (213 aa).

Thr-99, Asp-101, Glu-114, and Gln-133 together coordinate Mg(2+).

This sequence belongs to the RecU family. Mg(2+) serves as cofactor.

The protein localises to the cytoplasm. It carries out the reaction Endonucleolytic cleavage at a junction such as a reciprocal single-stranded crossover between two homologous DNA duplexes (Holliday junction).. Functionally, endonuclease that resolves Holliday junction intermediates in genetic recombination. Cleaves mobile four-strand junctions by introducing symmetrical nicks in paired strands. Promotes annealing of linear ssDNA with homologous dsDNA. Required for DNA repair, homologous recombination and chromosome segregation. This Lactococcus lactis subsp. lactis (strain IL1403) (Streptococcus lactis) protein is Holliday junction resolvase RecU.